A 138-amino-acid chain; its full sequence is Prefoldin subunit alpha (138 aa).

Belongs to the prefoldin subunit alpha family. In terms of assembly, heterohexamer of two alpha and four beta subunits.

The protein localises to the cytoplasm. Functionally, molecular chaperone capable of stabilizing a range of proteins. Seems to fulfill an ATP-independent, HSP70-like function in archaeal de novo protein folding. The polypeptide is Prefoldin subunit alpha (Methanosphaera stadtmanae (strain ATCC 43021 / DSM 3091 / JCM 11832 / MCB-3)).